A 224-amino-acid polypeptide reads, in one-letter code: Large ribosomal subunit protein uL4 (224 aa).

A disordered region spans residues 52-109; the sequence is AAARQGTHSTKTRGDVSGGGRKPYRQKGTGRARQGSTRTPQFTGGGVVHGPKPRDYSQ.

This sequence belongs to the universal ribosomal protein uL4 family. As to quaternary structure, part of the 50S ribosomal subunit.

Functionally, one of the primary rRNA binding proteins, this protein initially binds near the 5'-end of the 23S rRNA. It is important during the early stages of 50S assembly. It makes multiple contacts with different domains of the 23S rRNA in the assembled 50S subunit and ribosome. Its function is as follows. Forms part of the polypeptide exit tunnel. This chain is Large ribosomal subunit protein uL4, found in Mycobacterium ulcerans (strain Agy99).